The sequence spans 420 residues: Gamma-glutamyl phosphate reductase (420 aa).

Belongs to the gamma-glutamyl phosphate reductase family.

Its subcellular location is the cytoplasm. The enzyme catalyses L-glutamate 5-semialdehyde + phosphate + NADP(+) = L-glutamyl 5-phosphate + NADPH + H(+). It participates in amino-acid biosynthesis; L-proline biosynthesis; L-glutamate 5-semialdehyde from L-glutamate: step 2/2. Catalyzes the NADPH-dependent reduction of L-glutamate 5-phosphate into L-glutamate 5-semialdehyde and phosphate. The product spontaneously undergoes cyclization to form 1-pyrroline-5-carboxylate. The chain is Gamma-glutamyl phosphate reductase from Chlorobium luteolum (strain DSM 273 / BCRC 81028 / 2530) (Pelodictyon luteolum).